A 153-amino-acid polypeptide reads, in one-letter code: Partner of bursicon (153 aa).

The first 35 residues, 1–35 (MCNSVRTALAASNCCSIVLCCVLLLTLTLTVAVTA), serve as a signal peptide directing secretion. 5 cysteine pairs are disulfide-bonded: Cys-44-Cys-102, Cys-68-Cys-117, Cys-77-Cys-143, Cys-81-Cys-145, and Cys-99-Cys-148. The 96-residue stretch at 44 to 139 (CETLPSEIHL…SATMEIRLKE (96 aa)) folds into the CTCK domain.

Heterodimer of burs and pburs.

The protein resides in the secreted. Final heterodimeric neurohormone released at the end of the molting cycle, involved in the sclerotization (tanning) of the insect cuticle, melanization and wing spreading. The sequence is that of Partner of bursicon from Anopheles gambiae (African malaria mosquito).